The following is an 85-amino-acid chain: DNA-directed RNA polymerase subunit omega (85 aa).

The protein belongs to the RNA polymerase subunit omega family. In terms of assembly, the RNAP catalytic core consists of 2 alpha, 1 beta, 1 beta' and 1 omega subunit. When a sigma factor is associated with the core the holoenzyme is formed, which can initiate transcription.

It catalyses the reaction RNA(n) + a ribonucleoside 5'-triphosphate = RNA(n+1) + diphosphate. In terms of biological role, promotes RNA polymerase assembly. Latches the N- and C-terminal regions of the beta' subunit thereby facilitating its interaction with the beta and alpha subunits. This is DNA-directed RNA polymerase subunit omega from Latilactobacillus sakei subsp. sakei (strain 23K) (Lactobacillus sakei subsp. sakei).